We begin with the raw amino-acid sequence, 954 residues long: Bifunctional endo-1,4-beta-xylanase XylA (954 aa).

Positions 1–27 form a signal peptide, or 28, or 29; it reads MKLSKIKKVLSGTVSALMIASAAPVVA. The 208-residue stretch at 29–236 folds into the GH11 domain; it reads AADQQTRGNV…SNGSANVKSV (208 aa). The Nucleophile role is filled by glutamate 122. Glutamate 223 serves as the catalytic Proton donor. Polar residues predominate over residues 233 to 243; it reads VKSVSVTQGGS. The disordered stretch occupies residues 233-628; sequence VKSVSVTQGG…NNNNSAGSSD (396 aa). Residues 246 to 622 show a composition bias toward low complexity; the sequence is NGGQQQNNDW…WNQGQQNNNN (377 aa). The region spanning 624 to 952 is the GH10 domain; that stretch reads AGSSDSLKGA…KPAYDRVMAL (329 aa). The active-site Proton donor is the glutamate 774. Catalysis depends on glutamate 884, which acts as the Nucleophile.

The protein in the N-terminal section; belongs to the glycosyl hydrolase 11 (cellulase G) family. This sequence in the C-terminal section; belongs to the glycosyl hydrolase 10 (cellulase F) family.

It catalyses the reaction Endohydrolysis of (1-&gt;4)-beta-D-xylosidic linkages in xylans.. It functions in the pathway glycan degradation; xylan degradation. Xylanase domain releases more xylo-oligosaccharides and GH10 domain more xylose. This Ruminococcus flavefaciens protein is Bifunctional endo-1,4-beta-xylanase XylA (xynA).